The sequence spans 951 residues: AP-1 complex subunit beta-1 (951 aa).

Lys318 bears the N6-acetyllysine mark. Tyr574 is modified (3'-nitrotyrosine).

This sequence belongs to the adaptor complexes large subunit family. Adaptor protein complex 1 (AP-1) is a heterotetramer composed of two large adaptins (gamma-type subunit AP1G1 and beta-type subunit AP1B1), a medium adaptin (mu-type subunit AP1M1 or AP1M2) and a small adaptin (sigma-type subunit AP1S1 or AP1S2 or AP1S3).

The protein resides in the cytoplasmic vesicle. The protein localises to the clathrin-coated vesicle membrane. It is found in the golgi apparatus. Subunit of clathrin-associated adaptor protein complex 1 that plays a role in protein sorting in the late-Golgi/trans-Golgi network (TGN) and/or endosomes. The AP complexes mediate both the recruitment of clathrin to membranes and the recognition of sorting signals within the cytosolic tails of transmembrane cargo molecules. The chain is AP-1 complex subunit beta-1 (AP2B1) from Bos taurus (Bovine).